Consider the following 348-residue polypeptide: LIM domain-containing protein unc-97 (348 aa).

LIM zinc-binding domains follow at residues 21-73, 82-132, 146-196, 205-255, and 264-315; these read CVRC…CEHD, CGKC…CREC, CHKC…CLRC, CGAC…CEQH, and CFKC…CKRC.

As to quaternary structure, interacts with unc-98. Component of an integrin containing attachment complex, composed of at least pat-2, pat-3, pat-4, pat-6, unc-52, unc-97 and unc-112. As to expression, restricted to tissue types that attach to the hypodermis, specifically body wall muscles, vulval muscles, and mechanosensory neurons.

It is found in the cell junction. It localises to the adherens junction. The protein resides in the nucleus. Component of an integrin containing attachment complex, which is required for muscle development and maintenance. Probably function in adherens junction. Affects the structural integrity of the integrin containing muscle adherens junctions and contributes to the mechanosensory functions of touch neurons. In Caenorhabditis elegans, this protein is LIM domain-containing protein unc-97.